Reading from the N-terminus, the 69-residue chain is Amphipathic peptide CT2 (69 aa).

A signal peptide spans 1–23 (MKTQFVILIVAVVLLQLIANSEA). The residue at position 36 (Phe36) is a Phenylalanine amide. The propeptide occupies 40 to 69 (GLRNLDNLDDDIFEPEMSEADLRYLQDLLR).

The protein belongs to the non-disulfide-bridged peptide (NDBP) superfamily. Short antimicrobial peptide (group 4) family. As to expression, expressed by the venom gland.

Its subcellular location is the secreted. The protein localises to the target cell membrane. Functionally, amphipathic peptide that shows antibacterial activities against both Gram-positive (MIC=10 uM, 20 uM and 20 uM against S.aureus, B.subtilis and S.agalactiae, respectively) and Gram-negative bacteria (MIC=20 uM, 10 uM, and 10 uM against E.coli, S.typhi, and P.aeruginosa, respectively). Is mildly hemolytic at its MIC range, but shows a strong cytotoxic activity at higher concentrations, reaching 84% lysis at 50 uM. This is Amphipathic peptide CT2 from Vaejovis mexicanus smithi (Mexican scorpion).